A 92-amino-acid polypeptide reads, in one-letter code: Small ribosomal subunit protein uS19 (92 aa).

Belongs to the universal ribosomal protein uS19 family.

In terms of biological role, protein S19 forms a complex with S13 that binds strongly to the 16S ribosomal RNA. The chain is Small ribosomal subunit protein uS19 from Acaryochloris marina (strain MBIC 11017).